Here is a 481-residue protein sequence, read N- to C-terminus: Cysteine--tRNA ligase (481 aa).

Cys-29 serves as a coordination point for Zn(2+). The 'HIGH' region motif lies at 31-41 (PTVYDYSHLGH). Zn(2+) is bound by residues Cys-210, His-235, and Glu-239. The 'KMSKS' region motif lies at 272-276 (KMSKS). ATP is bound at residue Lys-275.

This sequence belongs to the class-I aminoacyl-tRNA synthetase family. In terms of assembly, monomer. Requires Zn(2+) as cofactor.

It localises to the cytoplasm. The catalysed reaction is tRNA(Cys) + L-cysteine + ATP = L-cysteinyl-tRNA(Cys) + AMP + diphosphate. The sequence is that of Cysteine--tRNA ligase from Anaeromyxobacter sp. (strain K).